The following is a 629-amino-acid chain: DNA mismatch repair protein MutL (629 aa).

The protein belongs to the DNA mismatch repair MutL/HexB family.

In terms of biological role, this protein is involved in the repair of mismatches in DNA. It is required for dam-dependent methyl-directed DNA mismatch repair. May act as a 'molecular matchmaker', a protein that promotes the formation of a stable complex between two or more DNA-binding proteins in an ATP-dependent manner without itself being part of a final effector complex. The sequence is that of DNA mismatch repair protein MutL from Haemophilus influenzae (strain PittGG).